The sequence spans 678 residues: DNA ligase (678 aa).

NAD(+) is bound by residues 36–40 (DVVYD), 85–86 (SL), and E117. The active-site N6-AMP-lysine intermediate is K119. Residues R140, E177, K294, and K318 each coordinate NAD(+). 4 residues coordinate Zn(2+): C412, C415, C430, and C435. Positions 598 to 678 (ISSTPLAGKT…QLLKMINPQE (81 aa)) constitute a BRCT domain.

It belongs to the NAD-dependent DNA ligase family. LigA subfamily. The cofactor is Mg(2+). Requires Mn(2+) as cofactor.

The enzyme catalyses NAD(+) + (deoxyribonucleotide)n-3'-hydroxyl + 5'-phospho-(deoxyribonucleotide)m = (deoxyribonucleotide)n+m + AMP + beta-nicotinamide D-nucleotide.. Its function is as follows. DNA ligase that catalyzes the formation of phosphodiester linkages between 5'-phosphoryl and 3'-hydroxyl groups in double-stranded DNA using NAD as a coenzyme and as the energy source for the reaction. It is essential for DNA replication and repair of damaged DNA. The sequence is that of DNA ligase from Gloeothece citriformis (strain PCC 7424) (Cyanothece sp. (strain PCC 7424)).